We begin with the raw amino-acid sequence, 404 residues long: Serine/threonine transporter SstT (404 aa).

Helical transmembrane passes span isoleucine 17 to isoleucine 37, isoleucine 39 to leucine 59, methionine 75 to isoleucine 95, alanine 138 to leucine 158, isoleucine 179 to valine 199, leucine 212 to leucine 232, isoleucine 287 to leucine 307, phenylalanine 319 to valine 339, and phenylalanine 354 to isoleucine 374.

This sequence belongs to the dicarboxylate/amino acid:cation symporter (DAACS) (TC 2.A.23) family.

It is found in the cell membrane. The catalysed reaction is L-serine(in) + Na(+)(in) = L-serine(out) + Na(+)(out). It carries out the reaction L-threonine(in) + Na(+)(in) = L-threonine(out) + Na(+)(out). In terms of biological role, involved in the import of serine and threonine into the cell, with the concomitant import of sodium (symport system). In Streptococcus equi subsp. equi (strain 4047), this protein is Serine/threonine transporter SstT.